A 430-amino-acid chain; its full sequence is Adenylosuccinate synthetase (430 aa).

GTP is bound by residues 12-18 (GDEGKGK) and 40-42 (GHT). Asp13 acts as the Proton acceptor in catalysis. Mg(2+)-binding residues include Asp13 and Gly40. Residues 13–16 (DEGK), 38–41 (NAGH), Thr128, Arg142, Gln223, Thr238, and Arg302 each bind IMP. The Proton donor role is filled by His41. 298–304 (TTTGRPR) is a substrate binding site. GTP-binding positions include Arg304, 330 to 332 (SID), and 412 to 414 (SVG).

The protein belongs to the adenylosuccinate synthetase family. Homodimer. Mg(2+) is required as a cofactor.

It is found in the cytoplasm. It catalyses the reaction IMP + L-aspartate + GTP = N(6)-(1,2-dicarboxyethyl)-AMP + GDP + phosphate + 2 H(+). Its pathway is purine metabolism; AMP biosynthesis via de novo pathway; AMP from IMP: step 1/2. Functionally, plays an important role in the de novo pathway of purine nucleotide biosynthesis. Catalyzes the first committed step in the biosynthesis of AMP from IMP. This Exiguobacterium sibiricum (strain DSM 17290 / CCUG 55495 / CIP 109462 / JCM 13490 / 255-15) protein is Adenylosuccinate synthetase.